Consider the following 516-residue polypeptide: 2,3-bisphosphoglycerate-independent phosphoglycerate mutase (516 aa).

Mn(2+)-binding residues include aspartate 13 and serine 63. Serine 63 acts as the Phosphoserine intermediate in catalysis. Residues histidine 124, 154–155 (RD), arginine 186, arginine 192, 262–265 (RPDR), and lysine 337 each bind substrate. Mn(2+)-binding residues include aspartate 404, histidine 408, aspartate 445, histidine 446, and histidine 464.

It belongs to the BPG-independent phosphoglycerate mutase family. Monomer. It depends on Mn(2+) as a cofactor.

It carries out the reaction (2R)-2-phosphoglycerate = (2R)-3-phosphoglycerate. The protein operates within carbohydrate degradation; glycolysis; pyruvate from D-glyceraldehyde 3-phosphate: step 3/5. Functionally, catalyzes the interconversion of 2-phosphoglycerate and 3-phosphoglycerate. The chain is 2,3-bisphosphoglycerate-independent phosphoglycerate mutase from Cellvibrio japonicus (strain Ueda107) (Pseudomonas fluorescens subsp. cellulosa).